We begin with the raw amino-acid sequence, 249 residues long: 1-(5-phosphoribosyl)-5-[(5-phosphoribosylamino)methylideneamino] imidazole-4-carboxamide isomerase (249 aa).

Catalysis depends on Asp10, which acts as the Proton acceptor. Asp136 serves as the catalytic Proton donor.

It belongs to the HisA/HisF family.

It is found in the cytoplasm. It catalyses the reaction 1-(5-phospho-beta-D-ribosyl)-5-[(5-phospho-beta-D-ribosylamino)methylideneamino]imidazole-4-carboxamide = 5-[(5-phospho-1-deoxy-D-ribulos-1-ylimino)methylamino]-1-(5-phospho-beta-D-ribosyl)imidazole-4-carboxamide. It participates in amino-acid biosynthesis; L-histidine biosynthesis; L-histidine from 5-phospho-alpha-D-ribose 1-diphosphate: step 4/9. This chain is 1-(5-phosphoribosyl)-5-[(5-phosphoribosylamino)methylideneamino] imidazole-4-carboxamide isomerase, found in Symbiobacterium thermophilum (strain DSM 24528 / JCM 14929 / IAM 14863 / T).